A 131-amino-acid chain; its full sequence is Small ribosomal subunit protein uS8 (131 aa).

Belongs to the universal ribosomal protein uS8 family. In terms of assembly, part of the 30S ribosomal subunit. Contacts proteins S5 and S12.

In terms of biological role, one of the primary rRNA binding proteins, it binds directly to 16S rRNA central domain where it helps coordinate assembly of the platform of the 30S subunit. In Burkholderia ambifaria (strain MC40-6), this protein is Small ribosomal subunit protein uS8.